The primary structure comprises 185 residues: Transcription termination/antitermination protein NusG (185 aa).

The KOW domain occupies 134–164; it reads VGKRVRIVDGAFSGFEAPITEINGDKLTLTV.

The protein belongs to the NusG family.

Functionally, participates in transcription elongation, termination and antitermination. The polypeptide is Transcription termination/antitermination protein NusG (Lactococcus lactis subsp. lactis (strain IL1403) (Streptococcus lactis)).